The chain runs to 283 residues: Isochorismatase domain-containing protein 1 (283 aa).

The protein belongs to the isochorismatase family.

This Salmo salar (Atlantic salmon) protein is Isochorismatase domain-containing protein 1 (isoc1).